A 347-amino-acid polypeptide reads, in one-letter code: Eukaryotic translation initiation factor 3 subunit I (347 aa).

WD repeat units follow at residues Gly8 to Asp49, His51 to Thr89, Thr149 to Glu190, Val194 to Thr233, and Gly291 to Lys330.

Belongs to the eIF-3 subunit I family. Component of the eukaryotic translation initiation factor 3 (eIF-3) complex.

It localises to the cytoplasm. Component of the eukaryotic translation initiation factor 3 (eIF-3) complex, which is involved in protein synthesis of a specialized repertoire of mRNAs and, together with other initiation factors, stimulates binding of mRNA and methionyl-tRNAi to the 40S ribosome. The eIF-3 complex specifically targets and initiates translation of a subset of mRNAs involved in cell proliferation. This chain is Eukaryotic translation initiation factor 3 subunit I, found in Candida glabrata (strain ATCC 2001 / BCRC 20586 / JCM 3761 / NBRC 0622 / NRRL Y-65 / CBS 138) (Yeast).